We begin with the raw amino-acid sequence, 278 residues long: Maltodextrin transport system permease protein MdxG (278 aa).

The next 6 membrane-spanning stretches (helical) occupy residues I12–T32, T74–Y94, L108–V128, M131–I151, I183–A203, and V242–F262. In terms of domain architecture, ABC transmembrane type-1 spans Y71 to L263.

Belongs to the binding-protein-dependent transport system permease family. MalFG subfamily. The complex is composed of two ATP-binding proteins (MsmX), two transmembrane proteins (MdxF and MdxG) and a solute-binding protein (MdxE).

The protein resides in the cell membrane. Functionally, part of the ABC transporter complex involved in maltodextrin import. Probably responsible for the translocation of the substrate across the membrane. The polypeptide is Maltodextrin transport system permease protein MdxG (mdxG) (Bacillus subtilis (strain 168)).